The following is a 1303-amino-acid chain: DNA-directed RNA polymerase subunit beta' (1303 aa).

Residues C60, C62, C75, and C78 each contribute to the Zn(2+) site. Mg(2+) contacts are provided by D535, D537, and D539. C876, C953, C960, and C963 together coordinate Zn(2+).

It belongs to the RNA polymerase beta' chain family. The RNAP catalytic core consists of 2 alpha, 1 beta, 1 beta' and 1 omega subunit. When a sigma factor is associated with the core the holoenzyme is formed, which can initiate transcription. Mg(2+) is required as a cofactor. The cofactor is Zn(2+).

The enzyme catalyses RNA(n) + a ribonucleoside 5'-triphosphate = RNA(n+1) + diphosphate. Functionally, DNA-dependent RNA polymerase catalyzes the transcription of DNA into RNA using the four ribonucleoside triphosphates as substrates. The sequence is that of DNA-directed RNA polymerase subunit beta' from Saccharopolyspora erythraea (strain ATCC 11635 / DSM 40517 / JCM 4748 / NBRC 13426 / NCIMB 8594 / NRRL 2338).